The chain runs to 500 residues: Glycerol kinase (500 aa).

Residue T11 coordinates ADP. Positions 11, 12, and 13 each coordinate ATP. T11 contacts sn-glycerol 3-phosphate. Residue R15 participates in ADP binding. Sn-glycerol 3-phosphate is bound by residues R81, E82, Y133, and D242. Glycerol contacts are provided by R81, E82, Y133, D242, and Q243. T264 and G307 together coordinate ADP. Residues T264, G307, Q311, and G411 each contribute to the ATP site. G411 lines the ADP pocket.

The protein belongs to the FGGY kinase family.

The catalysed reaction is glycerol + ATP = sn-glycerol 3-phosphate + ADP + H(+). The protein operates within polyol metabolism; glycerol degradation via glycerol kinase pathway; sn-glycerol 3-phosphate from glycerol: step 1/1. Its activity is regulated as follows. Inhibited by fructose 1,6-bisphosphate (FBP). Its function is as follows. Key enzyme in the regulation of glycerol uptake and metabolism. Catalyzes the phosphorylation of glycerol to yield sn-glycerol 3-phosphate. This Rhodopseudomonas palustris (strain BisA53) protein is Glycerol kinase.